We begin with the raw amino-acid sequence, 2212 residues long: COPII coat assembly protein SEC16 (2212 aa).

Polar residues-rich tracts occupy residues 1–12 and 183–200; these read MSIRKSTTSPVS and ENSA…SSTI. Disordered regions lie at residues 1–31, 173–343, 355–451, 480–563, 626–666, 705–849, 861–948, 1380–1400, 1416–1446, 1484–1542, 1572–1593, 1680–1866, 1883–1927, and 1960–2212; these read MSIR…AEPS, IYGE…QQEV, RESS…HDYS, GFFT…PVEP, KVKP…PPVS, AAPV…APPI, SATS…SNPN, EEPK…PSVS, NKYP…VSVP, SFSV…VPPV, SSIG…PTVN, LSAS…FGYN, FDNS…YQGD, and SSRL…FDKK. The span at 246–282 shows a compositional bias: basic and acidic residues; the sequence is QPQKVEHVLPWEEKPDEVSQKDEALPWEERRVEHPEQ. Polar residues predominate over residues 430 to 444; it reads EQSTKPQDTQPQVSQ. Residues 483-497 show a composition bias toward basic and acidic residues; the sequence is TERRPEQESETKQES. Acidic residues-rich tracts occupy residues 498 to 509 and 533 to 553; these read LDELFEKDEDFL and LDLD…EPEL. The span at 637–651 shows a compositional bias: polar residues; the sequence is TTKYSQPVASPNLSN. The segment covering 654–665 has biased composition (pro residues); that stretch reads SAPPATTIPPPV. 3 stretches are compositionally biased toward polar residues: residues 714-731, 740-767, and 778-807; these read PHIQ…SASS, MPSN…TSSG, and APPS…SGMS. Over residues 808–819 the composition is skewed to low complexity; sequence QPGLQPFPQPQG. Composition is skewed to polar residues over residues 830-849 and 909-933; these read QIQN…APPI and HSGT…NPRN. Polar residues-rich tracts occupy residues 1416–1437, 1484–1507, and 1521–1536; these read NKYP…SIAP, SFSV…QSHV, and YSPS…STAS. Positions 1681–1699 are enriched in polar residues; that stretch reads SASQEVSGQPSAASTSVPS. The segment covering 1960–1975 has biased composition (low complexity); that stretch reads SSRLSQSQQSALYQQY. A compositionally biased stretch (acidic residues) spans 1989–2001; that stretch reads VEEDDEEDEDEED. Basic and acidic residues-rich tracts occupy residues 2002–2036 and 2065–2080; these read RDKK…RDPG and YDEK…RPIE. Composition is skewed to low complexity over residues 2121–2131 and 2138–2147; these read NPSGVAPTAAP and PSGVTSGPPS. Residues 2195-2205 show a composition bias toward basic residues; sequence RKAKRNTRRGH.

Belongs to the SEC16 family.

The protein resides in the endoplasmic reticulum membrane. In terms of biological role, involved in the initiation of assembly of the COPII coat required for the formation of transport vesicles from the endoplasmic reticulum (ER) and the selection of cargo molecules. Also involved in autophagy. The polypeptide is COPII coat assembly protein SEC16 (SEC16) (Scheffersomyces stipitis (strain ATCC 58785 / CBS 6054 / NBRC 10063 / NRRL Y-11545) (Yeast)).